The primary structure comprises 73 residues: MAKKDGVIEIEGQVIEPLPNAMFRVELANGHKVLAHISGKMRMHYIRILPGDRVVVELSPYDLNRGRIVYRYR.

One can recognise an S1-like domain in the interval 1–73 (MAKKDGVIEI…NRGRIVYRYR (73 aa)).

The protein belongs to the IF-1 family. Component of the 30S ribosomal translation pre-initiation complex which assembles on the 30S ribosome in the order IF-2 and IF-3, IF-1 and N-formylmethionyl-tRNA(fMet); mRNA recruitment can occur at any time during PIC assembly.

Its subcellular location is the cytoplasm. Its function is as follows. One of the essential components for the initiation of protein synthesis. Stabilizes the binding of IF-2 and IF-3 on the 30S subunit to which N-formylmethionyl-tRNA(fMet) subsequently binds. Helps modulate mRNA selection, yielding the 30S pre-initiation complex (PIC). Upon addition of the 50S ribosomal subunit IF-1, IF-2 and IF-3 are released leaving the mature 70S translation initiation complex. In Acidothermus cellulolyticus (strain ATCC 43068 / DSM 8971 / 11B), this protein is Translation initiation factor IF-1.